The sequence spans 741 residues: NAD(P)H-quinone oxidoreductase subunit 5, chloroplastic (741 aa).

A run of 16 helical transmembrane segments spans residues 9-29, 40-60, 89-109, 125-145, 147-167, 185-205, 219-239, 258-278, 289-311, 327-347, 354-374, 396-416, 425-445, 549-569, 605-625, and 721-741; these read WIIP…LLLF, WAFQ…NLSI, IDPL…LVLI, FAYM…SNLI, IYIF…FWFT, GDFG…SFEF, NQVN…GAIA, TPIS…FLVA, HIMN…LALA, LGYM…FHLI, ALLF…VGYC, NSFL…CFWS, WLYS…TAFY, LFPI…GIPL, LFSV…YKPV, and YLFF…FLNL.

The protein belongs to the complex I subunit 5 family. As to quaternary structure, NDH is composed of at least 16 different subunits, 5 of which are encoded in the nucleus.

The protein resides in the plastid. Its subcellular location is the chloroplast thylakoid membrane. It carries out the reaction a plastoquinone + NADH + (n+1) H(+)(in) = a plastoquinol + NAD(+) + n H(+)(out). It catalyses the reaction a plastoquinone + NADPH + (n+1) H(+)(in) = a plastoquinol + NADP(+) + n H(+)(out). NDH shuttles electrons from NAD(P)H:plastoquinone, via FMN and iron-sulfur (Fe-S) centers, to quinones in the photosynthetic chain and possibly in a chloroplast respiratory chain. The immediate electron acceptor for the enzyme in this species is believed to be plastoquinone. Couples the redox reaction to proton translocation, and thus conserves the redox energy in a proton gradient. The chain is NAD(P)H-quinone oxidoreductase subunit 5, chloroplastic (ndhF) from Symphyotrichum cordifolium (Heart-leaved aster).